Here is a 491-residue protein sequence, read N- to C-terminus: Protein nucleotidyltransferase YdiU (491 aa).

Residues G94, G96, R97, K117, D129, G130, R180, and R187 each contribute to the ATP site. The active-site Proton acceptor is the D256. Residues N257 and D266 each contribute to the Mg(2+) site. An ATP-binding site is contributed by D266.

It belongs to the SELO family. The cofactor is Mg(2+). Requires Mn(2+) as cofactor.

The enzyme catalyses L-seryl-[protein] + ATP = 3-O-(5'-adenylyl)-L-seryl-[protein] + diphosphate. It catalyses the reaction L-threonyl-[protein] + ATP = 3-O-(5'-adenylyl)-L-threonyl-[protein] + diphosphate. The catalysed reaction is L-tyrosyl-[protein] + ATP = O-(5'-adenylyl)-L-tyrosyl-[protein] + diphosphate. It carries out the reaction L-histidyl-[protein] + UTP = N(tele)-(5'-uridylyl)-L-histidyl-[protein] + diphosphate. The enzyme catalyses L-seryl-[protein] + UTP = O-(5'-uridylyl)-L-seryl-[protein] + diphosphate. It catalyses the reaction L-tyrosyl-[protein] + UTP = O-(5'-uridylyl)-L-tyrosyl-[protein] + diphosphate. Nucleotidyltransferase involved in the post-translational modification of proteins. It can catalyze the addition of adenosine monophosphate (AMP) or uridine monophosphate (UMP) to a protein, resulting in modifications known as AMPylation and UMPylation. This chain is Protein nucleotidyltransferase YdiU, found in Bacillus cytotoxicus (strain DSM 22905 / CIP 110041 / 391-98 / NVH 391-98).